Consider the following 219-residue polypeptide: Small ribosomal subunit protein uS5 (219 aa).

Residues 1–21 show a composition bias toward polar residues; sequence MTDQNQKANQGNGLQTTNLQA. Positions 1–61 are disordered; the sequence is MTDQNQKANQ…NQNRRFQKPA (61 aa). Positions 35-47 are enriched in basic and acidic residues; the sequence is GIKKAVSKKEGGG. The S5 DRBM domain maps to 66-129; that stretch reads FEERIVKLKR…KAAHNSLHTI (64 aa).

It belongs to the universal ribosomal protein uS5 family. Part of the 30S ribosomal subunit. Contacts proteins S4 and S8.

In terms of biological role, with S4 and S12 plays an important role in translational accuracy. Functionally, located at the back of the 30S subunit body where it stabilizes the conformation of the head with respect to the body. The sequence is that of Small ribosomal subunit protein uS5 from Mycoplasma pneumoniae (strain ATCC 29342 / M129 / Subtype 1) (Mycoplasmoides pneumoniae).